Reading from the N-terminus, the 377-residue chain is MKFKYGTVVLGSFLGLSVVLAACGARGKFDQFDDGKIKLASSLTSKAAANALQTIIEKYNIVKSGKDYPIEITQIAGGYDGGRTDLQTRVSVKDKTNFYNLILNYPDLVSVLARSGMELLFDKVNVDKLEPNFLKFNEQISGVAKSGNYGIPVSLSTDILVLNGPVLHYILNSAKKEEANSQVKSQIKTSQIQAKGSLTIDTDENTKSLWEKIQNSAKANGETNQKGRKAAKSNKTALVQLKNGADTTTNEENKDTKTSDDKVKQTWGDYVEKDDGLKNYTFRASVFENWHDFLDFSTRVAKSFTEKVSNITNKKGTDIQGVLGVDSSPNVLFASVFAAGGGNYENFFYKLKDGRADFSNFKNKGSSYQNLQSVFKD.

The N-terminal stretch at 1-22 (MKFKYGTVVLGSFLGLSVVLAA) is a signal peptide. Cysteine 23 is lipidated: N-palmitoyl cysteine. The S-diacylglycerol cysteine moiety is linked to residue cysteine 23. Positions 217 to 260 (AKANGETNQKGRKAAKSNKTALVQLKNGADTTTNEENKDTKTSD) are disordered. Residues 251–260 (EENKDTKTSD) are compositionally biased toward basic and acidic residues.

Belongs to the MG185/MG260 family.

It is found in the cell membrane. This is an uncharacterized protein from Mycoplasma pneumoniae (strain ATCC 29342 / M129 / Subtype 1) (Mycoplasmoides pneumoniae).